The following is a 79-amino-acid chain: Large ribosomal subunit protein uL30 (79 aa).

It belongs to the universal ribosomal protein uL30 family. In terms of assembly, part of the 50S ribosomal subunit.

This Anaeromyxobacter sp. (strain Fw109-5) protein is Large ribosomal subunit protein uL30.